Here is a 524-residue protein sequence, read N- to C-terminus: Lysine--tRNA ligase (524 aa).

E433 and E440 together coordinate Mg(2+).

Belongs to the class-II aminoacyl-tRNA synthetase family. In terms of assembly, homodimer. Mg(2+) serves as cofactor.

It is found in the cytoplasm. The enzyme catalyses tRNA(Lys) + L-lysine + ATP = L-lysyl-tRNA(Lys) + AMP + diphosphate. The sequence is that of Lysine--tRNA ligase from Colwellia psychrerythraea (strain 34H / ATCC BAA-681) (Vibrio psychroerythus).